The chain runs to 515 residues: 1-pyrroline-5-carboxylate dehydrogenase (515 aa).

Residues E286 and C320 contribute to the active site.

This sequence belongs to the aldehyde dehydrogenase family. RocA subfamily.

The catalysed reaction is L-glutamate 5-semialdehyde + NAD(+) + H2O = L-glutamate + NADH + 2 H(+). It participates in amino-acid degradation; L-proline degradation into L-glutamate; L-glutamate from L-proline: step 2/2. In Bacillus mycoides (strain KBAB4) (Bacillus weihenstephanensis), this protein is 1-pyrroline-5-carboxylate dehydrogenase.